The sequence spans 182 residues: UPF0397 protein SAG1634 (182 aa).

Transmembrane regions (helical) follow at residues 9–29 (VVATGIGAALFIIIGMLVNIP), 42–62 (AVLALFAVIYGPGVGFFTGFI), 74–94 (SPWWTWVLVSGLLGLMIGFFA), 109–129 (LLLFNVVQVIANLIGWSVVAP), and 148–168 (FLSSLVNSITIGVGGTLLLLA).

This sequence belongs to the UPF0397 family.

It localises to the cell membrane. This Streptococcus agalactiae serotype V (strain ATCC BAA-611 / 2603 V/R) protein is UPF0397 protein SAG1634.